Reading from the N-terminus, the 208-residue chain is MEERSGVLETSRSCKQLIGPEGSDKEFEGYIDSNLRVVETFLRLFPIGLCVTALVIMLKNSQENKYGSVSYTDLGAFRYLVHANGICAGYSLFSAIFVALPRLSSVHIAWTFFVLDQVLTYIILSAGAASAEVLYLAEKGNMATAWSSACRSFGPFCHKVTASTTITFVVVVFYVLLSLISSYKLFSKYDAPTVSNPSMGADIVAFHG.

Over 1 to 36 (MEERSGVLETSRSCKQLIGPEGSDKEFEGYIDSNLR) the chain is Cytoplasmic. Residues 37-57 (VVETFLRLFPIGLCVTALVIM) traverse the membrane as a helical segment. The Extracellular portion of the chain corresponds to 58 to 79 (LKNSQENKYGSVSYTDLGAFRY). A helical transmembrane segment spans residues 80–100 (LVHANGICAGYSLFSAIFVAL). At 101–107 (PRLSSVH) the chain is on the cytoplasmic side. Residues 108-128 (IAWTFFVLDQVLTYIILSAGA) traverse the membrane as a helical segment. At 129-159 (ASAEVLYLAEKGNMATAWSSACRSFGPFCHK) the chain is on the extracellular side. Residues 160–180 (VTASTTITFVVVVFYVLLSLI) traverse the membrane as a helical segment. At 181–208 (SSYKLFSKYDAPTVSNPSMGADIVAFHG) the chain is on the cytoplasmic side.

This sequence belongs to the Casparian strip membrane proteins (CASP) family. Homodimer and heterodimers.

The protein resides in the cell membrane. The chain is CASP-like protein 2A1 from Glycine max (Soybean).